A 1066-amino-acid polypeptide reads, in one-letter code: Pumilio homolog 2 (1066 aa).

The tract at residues 1-260 is interaction with SNAPIN; sequence MNHDFQALAL…TVGLFDYNSQ (260 aa). Phosphoserine is present on residues Ser-67, Ser-70, Ser-82, and Ser-102. Disordered regions lie at residues 106-203, 368-408, and 490-551; these read KLDS…GPLP, TANQ…AESL, and TGST…SASL. The span at 119–133 shows a compositional bias: basic and acidic residues; sequence RDAETDGPEKGDQKG. A phosphoserine mark is found at Ser-136, Ser-177, and Ser-181. Thr-183 is modified (phosphothreonine). Residues 368 to 383 show a composition bias toward low complexity; that stretch reads TANQQAASQAQPGQQQ. The span at 394–406 shows a compositional bias: polar residues; the sequence is ITPSQGQQGQQAE. At Thr-395 the chain carries Phosphothreonine. Residues 503–514 show a composition bias toward low complexity; it reads QPPQQQQQQQQP. The span at 515–525 shows a compositional bias: polar residues; it reads STNLQSNSFYG. Residues 526–540 are compositionally biased toward low complexity; that stretch reads SSSLTNSSQSSSLFS. 2 positions are modified to phosphoserine: Ser-587 and Ser-592. The tract at residues 620-650 is disordered; the sequence is SPIGMPLPSQTPGHSLTPPPSLSSHGSSSSL. Over residues 630–650 the composition is skewed to low complexity; sequence TPGHSLTPPPSLSSHGSSSSL. Omega-N-methylarginine is present on Arg-674. A phosphoserine mark is found at Ser-684 and Ser-700. One can recognise a PUM-HD domain in the interval 706–1048; the sequence is GRSRLLEDFR…HILAKLEKYY (343 aa). Pumilio repeat units follow at residues 726–761, 762–797, 798–835, 836–871, 872–907, 908–943, 944–979, and 980–1022; these read DLIG…IVFN, EILQ…ALAT, RIRG…EMVK, ELDG…FIID, AFKG…PILE, ELHQ…KIVS, EIRG…LLID, and EVCC…IIMH. The interval 741–745 is adenine-nucleotide binding in RNA target; it reads SRFIQ. The interval 777 to 781 is uracil-nucleotide binding in RNA target; the sequence is NYVIQ. The segment at 813–817 is adenine-nucleotide binding in RNA target; it reads CRVIQ. The segment at 851–855 is non-specific-nucleotide binding in RNA target; sequence NHVVQ. Positions 887 to 891 are adenine-nucleotide binding in RNA target; that stretch reads CRVIQ. The uracil-nucleotide binding in RNA target stretch occupies residues 923-927; the sequence is NYVIQ. The tract at residues 959-963 is guanine-nucleotide binding in RNA target; the sequence is SNVVE. The tract at residues 1002–1006 is uracil-nucleotide binding in RNA target; that stretch reads NYVVQ.

In terms of assembly, homodimer; homodimerizes in vitro. Interacts with DAZ1, DAZL and NANOS1 via its pumilio repeats. Interacts with NANOS3. Interacts with SNAPIN. Recruits the CCR4-POP2-NOT deadenylase leading to translational inhibition and mRNA degradation. Interacts with DDX20. In case of viral infection, interacts with DHX58. As to expression, widely expressed. Expressed in embryonic stem cells, heart, kidney, lung, skin, intestine, spleen and thymus. Expressed at intermediate level in brain and liver. Weakly or not expressed in muscles and stomach. Expressed at various stages of myeloid and lymphoid cell development. In the testis expressed in the spermatogoni, spermatocytes, spermatids and Sertoli cells.

Its subcellular location is the cytoplasm. It is found in the cytoplasmic granule. The protein resides in the perinuclear region. Its function is as follows. Sequence-specific RNA-binding protein that acts as a post-transcriptional repressor by binding the 3'-UTR of mRNA targets. Binds to an RNA consensus sequence, the Pumilio Response Element (PRE), 5'-UGUANAUA-3', that is related to the Nanos Response Element (NRE). Mediates post-transcriptional repression of transcripts via different mechanisms: acts via direct recruitment of the CCR4-POP2-NOT deadenylase leading to translational inhibition and mRNA degradation. Also mediates deadenylation-independent repression by promoting accessibility of miRNAs. Acts as a post-transcriptional repressor of E2F3 mRNAs by binding to its 3'-UTR and facilitating miRNA regulation. Plays a role in cytoplasmic sensing of viral infection. Represses a program of genes necessary to maintain genomic stability such as key mitotic, DNA repair and DNA replication factors. Its ability to repress those target mRNAs is regulated by the lncRNA NORAD (non-coding RNA activated by DNA damage) which, due to its high abundance and multitude of PUMILIO binding sites, is able to sequester a significant fraction of PUM1 and PUM2 in the cytoplasm. May regulate DCUN1D3 mRNA levels. May support proliferation and self-renewal of stem cells. Binds specifically to miRNA MIR199A precursor, with PUM1, regulates miRNA MIR199A expression at a postranscriptional level. In Mus musculus (Mouse), this protein is Pumilio homolog 2 (Pum2).